A 269-amino-acid chain; its full sequence is Trans-aconitate 2-methyltransferase (269 aa).

The protein belongs to the methyltransferase superfamily. Tam family.

It is found in the cytoplasm. It carries out the reaction trans-aconitate + S-adenosyl-L-methionine = (E)-3-(methoxycarbonyl)pent-2-enedioate + S-adenosyl-L-homocysteine. Functionally, catalyzes the S-adenosylmethionine monomethyl esterification of trans-aconitate. The chain is Trans-aconitate 2-methyltransferase from Streptomyces avermitilis (strain ATCC 31267 / DSM 46492 / JCM 5070 / NBRC 14893 / NCIMB 12804 / NRRL 8165 / MA-4680).